The primary structure comprises 417 residues: MTYIEILGQNAKKASQSVARLSTASKNEILRDLARNIVADTETILTENARDVVKAKDNGISEIMVDRLRLNKDRIQAIANGIYQVADLADPIGQVVSGYTNLDGLKILKKRVPLGVIAMIFESRPNVSVDAFSLAFKTGNAIILRGGKDAIFSNTALVNCMRQTLQDTGHNPDIVQLVEDTSHVVAEELMQATDYVDVLIPRGGAKLIQTVKEKSKIPVIETGVGNVHIYIDEFADLDMAAKIVINAKTQRPSVCNAAEGLVVHQAIAKGFLSQLEKMLKESNQSVEFRADEEALQLLENAVAASESDYATEFLDYIMSVKVVDSFEQAISWINKYSSHHSEAIITNNISRAEIFQDMVDAAAVYVNASTRFTDGFVFGLGAEIGISTQKLHARGPMGLEALTSTKYYINGTGQVRE.

Belongs to the gamma-glutamyl phosphate reductase family.

It is found in the cytoplasm. It catalyses the reaction L-glutamate 5-semialdehyde + phosphate + NADP(+) = L-glutamyl 5-phosphate + NADPH + H(+). The protein operates within amino-acid biosynthesis; L-proline biosynthesis; L-glutamate 5-semialdehyde from L-glutamate: step 2/2. Catalyzes the NADPH-dependent reduction of L-glutamate 5-phosphate into L-glutamate 5-semialdehyde and phosphate. The product spontaneously undergoes cyclization to form 1-pyrroline-5-carboxylate. The chain is Gamma-glutamyl phosphate reductase from Streptococcus agalactiae serotype Ia (strain ATCC 27591 / A909 / CDC SS700).